Reading from the N-terminus, the 265-residue chain is 4-hydroxy-tetrahydrodipicolinate reductase (265 aa).

NAD(+) contacts are provided by residues 7–12 (GASGRM), aspartate 33, 96–98 (GTT), and 120–123 (AANF). Histidine 153 functions as the Proton donor/acceptor in the catalytic mechanism. Histidine 154 is a (S)-2,3,4,5-tetrahydrodipicolinate binding site. The Proton donor role is filled by lysine 157. Residue 163–164 (GT) participates in (S)-2,3,4,5-tetrahydrodipicolinate binding.

The protein belongs to the DapB family.

It is found in the cytoplasm. It carries out the reaction (S)-2,3,4,5-tetrahydrodipicolinate + NAD(+) + H2O = (2S,4S)-4-hydroxy-2,3,4,5-tetrahydrodipicolinate + NADH + H(+). The catalysed reaction is (S)-2,3,4,5-tetrahydrodipicolinate + NADP(+) + H2O = (2S,4S)-4-hydroxy-2,3,4,5-tetrahydrodipicolinate + NADPH + H(+). It functions in the pathway amino-acid biosynthesis; L-lysine biosynthesis via DAP pathway; (S)-tetrahydrodipicolinate from L-aspartate: step 4/4. Catalyzes the conversion of 4-hydroxy-tetrahydrodipicolinate (HTPA) to tetrahydrodipicolinate. This Cupriavidus taiwanensis (strain DSM 17343 / BCRC 17206 / CCUG 44338 / CIP 107171 / LMG 19424 / R1) (Ralstonia taiwanensis (strain LMG 19424)) protein is 4-hydroxy-tetrahydrodipicolinate reductase.